We begin with the raw amino-acid sequence, 324 residues long: Elongation factor P--(R)-beta-lysine ligase (324 aa).

75–77 (SPE) provides a ligand contact to substrate. ATP is bound by residues 99 to 101 (RNK) and asparagine 108. Residue tyrosine 117 coordinates substrate. Residue 243–244 (EL) coordinates ATP. Glutamate 250 is a binding site for substrate. Glycine 299 contacts ATP.

The protein belongs to the class-II aminoacyl-tRNA synthetase family. EpmA subfamily. Homodimer.

It catalyses the reaction D-beta-lysine + L-lysyl-[protein] + ATP = N(6)-((3R)-3,6-diaminohexanoyl)-L-lysyl-[protein] + AMP + diphosphate + H(+). With EpmB is involved in the beta-lysylation step of the post-translational modification of translation elongation factor P (EF-P). Catalyzes the ATP-dependent activation of (R)-beta-lysine produced by EpmB, forming a lysyl-adenylate, from which the beta-lysyl moiety is then transferred to the epsilon-amino group of a conserved specific lysine residue in EF-P. The sequence is that of Elongation factor P--(R)-beta-lysine ligase from Buchnera aphidicola subsp. Acyrthosiphon pisum (strain 5A).